Here is a 350-residue protein sequence, read N- to C-terminus: Phenylalanine--tRNA ligase alpha subunit (350 aa).

Glu-259 is a binding site for Mg(2+).

This sequence belongs to the class-II aminoacyl-tRNA synthetase family. Phe-tRNA synthetase alpha subunit type 1 subfamily. Tetramer of two alpha and two beta subunits. Mg(2+) is required as a cofactor.

Its subcellular location is the cytoplasm. The catalysed reaction is tRNA(Phe) + L-phenylalanine + ATP = L-phenylalanyl-tRNA(Phe) + AMP + diphosphate + H(+). In Rickettsia typhi (strain ATCC VR-144 / Wilmington), this protein is Phenylalanine--tRNA ligase alpha subunit.